The following is a 707-amino-acid chain: Golgin candidate 1 (707 aa).

The Cytoplasmic portion of the chain corresponds to 1 to 664 (MASWLKAAED…RATRFLWRYP (664 aa)). Disordered regions lie at residues 22–106 (VVED…EIHP), 121–196 (VADT…SKRD), and 234–256 (QEPK…ADTT). Over residues 38–47 (SGRKGSQGKR) the composition is skewed to low complexity. Residues 56–67 (VKEESSNKRDSS) are compositionally biased toward basic and acidic residues. The segment covering 68 to 80 (GDQSGPGVSQSEV) has biased composition (polar residues). Low complexity predominate over residues 83-95 (SKSSVSTDETSSS). Basic and acidic residues-rich tracts occupy residues 139-150 (DGDRSESKHADG), 185-196 (TQRELDDSSKRD), and 245-254 (LKREQDRRAD). Coiled coils occupy residues 287–424 (RVCA…NATK) and 452–608 (ADER…KSRV). The helical; Signal-anchor for type II membrane protein transmembrane segment at 665-685 (IARMFLLFYLVFVHLFLMYLI) threads the bilayer. The Lumenal segment spans residues 686–707 (HRLQEQAEAQEVAAMTNNVFRL).

Its subcellular location is the golgi apparatus membrane. Golgi matrix protein playing a role in tethering of vesicles to Golgi membranes and in maintaining the overall structure of the Golgi apparatus. In Arabidopsis thaliana (Mouse-ear cress), this protein is Golgin candidate 1 (GC1).